A 219-amino-acid polypeptide reads, in one-letter code: MENTDAIQVSSFPLPPAQYYKLYTDENVRNNRAPKPPAPIQGTYQMFGQQFSTEDNIIRPLEAQGFKRLYPQHFDRRKELKKLNHSLLVNFLDLIDLLVHNPDSPQRAEKIEDLNLLFVHIHHLLNEFRPHQARETLRVMMELQKRQRQETTQRFQNHLEKVREMVNNAFASLPDPAESDRLNSTVEPMDTGDDGEAGKSRGEGCHPLDRLMCELVDKM.

Residues 173–203 (LPDPAESDRLNSTVEPMDTGDDGEAGKSRGE) are disordered.

It belongs to the Mediator complex subunit 7 family. As to quaternary structure, component of the Mediator complex.

The protein localises to the nucleus. Its function is as follows. Component of the Mediator complex, a coactivator involved in the regulated transcription of nearly all RNA polymerase II-dependent genes. Mediator functions as a bridge to convey information from gene-specific regulatory proteins to the basal RNA polymerase II transcription machinery. Mediator is recruited to promoters by direct interactions with regulatory proteins and serves as a scaffold for the assembly of a functional preinitiation complex with RNA polymerase II and the general transcription factors. The protein is Mediator of RNA polymerase II transcription subunit 7 (MED7) of Aedes aegypti (Yellowfever mosquito).